Consider the following 160-residue polypeptide: Putative pre-16S rRNA nuclease (160 aa).

Belongs to the YqgF nuclease family.

It is found in the cytoplasm. In terms of biological role, could be a nuclease involved in processing of the 5'-end of pre-16S rRNA. The sequence is that of Putative pre-16S rRNA nuclease from Rhodopseudomonas palustris (strain ATCC BAA-98 / CGA009).